The following is a 167-amino-acid chain: UPF0179 protein Pars_2336 (167 aa).

Belongs to the UPF0179 family.

The polypeptide is UPF0179 protein Pars_2336 (Pyrobaculum arsenaticum (strain DSM 13514 / JCM 11321 / PZ6)).